The following is a 448-amino-acid chain: Probable metal transport system membrane protein CPn_0347/CP_0413/CPj0347/CpB0354 (448 aa).

8 helical membrane passes run 15-35 (FLAV…LLIS), 47-67 (ASYP…SLQA), 69-89 (IFWI…IIVF), 100-120 (SALC…ASYV), 144-164 (FLEA…LWWW), 193-213 (LIFI…VLIS), 233-253 (ILIL…YISV), and 270-290 (LPTG…CLLF).

Belongs to the ABC-3 integral membrane protein family.

Its subcellular location is the cell inner membrane. Its function is as follows. Part of an ATP-driven transport system CPn_0346/CPn_0347/CPn_0348/CPn_0349 for a metal. The protein is Probable metal transport system membrane protein CPn_0347/CP_0413/CPj0347/CpB0354 of Chlamydia pneumoniae (Chlamydophila pneumoniae).